Reading from the N-terminus, the 238-residue chain is uncharacterized protein (238 aa).

The next 6 helical transmembrane spans lie at 24-44 (IFIAALIFIVITAICFTYMKN), 78-98 (GFLLSSPFIIYQITLFILPGL), 109-129 (ILFISIILFFSGIVFAYIILV), 156-176 (FILLLLFSTGIAFQIPIIQVI), 188-208 (MYAYWKYIVLGATVIAAIITP), and 216-236 (IIMSIAILALYSSGIIILKIL).

The protein belongs to the TatC family.

It localises to the plastid. The protein localises to the chloroplast membrane. This is an uncharacterized protein from Gracilaria tenuistipitata var. liui (Red alga).